The chain runs to 454 residues: tRNA modification GTPase MnmE (454 aa).

(6S)-5-formyl-5,6,7,8-tetrahydrofolate-binding residues include arginine 23, glutamate 80, and lysine 120. Residues 216-377 (GMKVVIAGRP…LRNHLKQSMG (162 aa)) enclose the TrmE-type G domain. Residue asparagine 226 coordinates K(+). GTP contacts are provided by residues 226–231 (NAGKSS), 245–251 (TDIAGTT), 270–273 (DTAG), and 335–338 (NKAD). Residue serine 230 participates in Mg(2+) binding. Threonine 245, isoleucine 247, and threonine 250 together coordinate K(+). Threonine 251 serves as a coordination point for Mg(2+). Residue lysine 454 coordinates (6S)-5-formyl-5,6,7,8-tetrahydrofolate.

This sequence belongs to the TRAFAC class TrmE-Era-EngA-EngB-Septin-like GTPase superfamily. TrmE GTPase family. As to quaternary structure, homodimer. Heterotetramer of two MnmE and two MnmG subunits. K(+) is required as a cofactor.

Its subcellular location is the cytoplasm. In terms of biological role, exhibits a very high intrinsic GTPase hydrolysis rate. Involved in the addition of a carboxymethylaminomethyl (cmnm) group at the wobble position (U34) of certain tRNAs, forming tRNA-cmnm(5)s(2)U34. The chain is tRNA modification GTPase MnmE from Escherichia coli O157:H7.